We begin with the raw amino-acid sequence, 231 residues long: GSK-3-binding protein FRAT2 (231 aa).

2 disordered regions span residues 1–24 (MPCR…DDSF) and 53–109 (DTAH…PGAV). A compositionally biased stretch (acidic residues) spans 7–23 (EEEEAGDEAEGEEDDDS). Residues 172–194 (DPHRLLQQLVLSGNLIKEAVRRL) are involved in GSK-3 binding. The interval 203-231 (ATSPASAPGSGGGRSGPDSVTLQPSGAWL) is disordered.

The protein belongs to the GSK-3-binding protein family. Binds GSK-3 and prevents GSK-3-dependent phosphorylation.

In terms of biological role, positively regulates the Wnt signaling pathway by stabilizing beta-catenin through the association with GSK-3. This Mus musculus (Mouse) protein is GSK-3-binding protein FRAT2 (Frat2).